The sequence spans 96 residues: Protein RnfH (96 aa).

It belongs to the UPF0125 (RnfH) family.

This is Protein RnfH from Klebsiella pneumoniae (strain 342).